A 330-amino-acid polypeptide reads, in one-letter code: Aspartate--ammonia ligase (330 aa).

This sequence belongs to the class-II aminoacyl-tRNA synthetase family. AsnA subfamily.

Its subcellular location is the cytoplasm. The enzyme catalyses L-aspartate + NH4(+) + ATP = L-asparagine + AMP + diphosphate + H(+). The protein operates within amino-acid biosynthesis; L-asparagine biosynthesis; L-asparagine from L-aspartate (ammonia route): step 1/1. In Haemophilus influenzae (strain 86-028NP), this protein is Aspartate--ammonia ligase.